Here is a 640-residue protein sequence, read N- to C-terminus: 1,4-alpha-glucan branching enzyme GlgB (640 aa).

D317 functions as the Nucleophile in the catalytic mechanism. Catalysis depends on E370, which acts as the Proton donor.

Belongs to the glycosyl hydrolase 13 family. GlgB subfamily. In terms of assembly, monomer.

It carries out the reaction Transfers a segment of a (1-&gt;4)-alpha-D-glucan chain to a primary hydroxy group in a similar glucan chain.. Its pathway is glycan biosynthesis; glycogen biosynthesis. Catalyzes the formation of the alpha-1,6-glucosidic linkages in glycogen by scission of a 1,4-alpha-linked oligosaccharide from growing alpha-1,4-glucan chains and the subsequent attachment of the oligosaccharide to the alpha-1,6 position. The chain is 1,4-alpha-glucan branching enzyme GlgB from Nitratidesulfovibrio vulgaris (strain ATCC 29579 / DSM 644 / CCUG 34227 / NCIMB 8303 / VKM B-1760 / Hildenborough) (Desulfovibrio vulgaris).